Reading from the N-terminus, the 427-residue chain is L-rhamnose isomerase (427 aa).

Mn(2+) contacts are provided by His264, Asp296, and Asp298.

The protein belongs to the rhamnose isomerase family. Mn(2+) serves as cofactor.

It is found in the cytoplasm. The catalysed reaction is L-rhamnopyranose = L-rhamnulose. The protein operates within carbohydrate degradation; L-rhamnose degradation; glycerone phosphate from L-rhamnose: step 1/3. Its function is as follows. Catalyzes the interconversion of L-rhamnose and L-rhamnulose. This Lactiplantibacillus plantarum (strain ATCC BAA-793 / NCIMB 8826 / WCFS1) (Lactobacillus plantarum) protein is L-rhamnose isomerase.